A 74-amino-acid chain; its full sequence is Protein SspS (74 aa).

The protein belongs to the alpha/beta-type SASP family.

The polypeptide is Protein SspS (sspS) (Streptococcus pyogenes).